A 248-amino-acid polypeptide reads, in one-letter code: Enolase-phosphatase E1 (248 aa).

Residues D14 and E16 each contribute to the Mg(2+) site. Substrate-binding positions include 145–146 (SS) and K179. Residue D204 participates in Mg(2+) binding.

This sequence belongs to the HAD-like hydrolase superfamily. MasA/MtnC family. In terms of assembly, monomer. The cofactor is Mg(2+).

Its subcellular location is the cytoplasm. The protein localises to the nucleus. It carries out the reaction 5-methylsulfanyl-2,3-dioxopentyl phosphate + H2O = 1,2-dihydroxy-5-(methylsulfanyl)pent-1-en-3-one + phosphate. It functions in the pathway amino-acid biosynthesis; L-methionine biosynthesis via salvage pathway; L-methionine from S-methyl-5-thio-alpha-D-ribose 1-phosphate: step 3/6. The protein operates within amino-acid biosynthesis; L-methionine biosynthesis via salvage pathway; L-methionine from S-methyl-5-thio-alpha-D-ribose 1-phosphate: step 4/6. Functionally, bifunctional enzyme that catalyzes the enolization of 2,3-diketo-5-methylthiopentyl-1-phosphate (DK-MTP-1-P) into the intermediate 2-hydroxy-3-keto-5-methylthiopentenyl-1-phosphate (HK-MTPenyl-1-P), which is then dephosphorylated to form the acireductone 1,2-dihydroxy-3-keto-5-methylthiopentene (DHK-MTPene). This chain is Enolase-phosphatase E1, found in Caenorhabditis elegans.